We begin with the raw amino-acid sequence, 156 residues long: Transcription inhibitor protein Gfh1 (156 aa).

Residues M1 to I74 are a coiled coil. 2 residues coordinate Zn(2+): E20 and E24.

Belongs to the GreA/GreB family. In terms of assembly, interacts with RNAP.

Its function is as follows. Inhibits all catalytic activities of RNA polymerase (RNAP) by partially occluding its substrate-binding site and preventing NTP binding. The sequence is that of Transcription inhibitor protein Gfh1 (gfh1) from Thermus thermophilus (strain ATCC 27634 / DSM 579 / HB8).